Consider the following 402-residue polypeptide: Tyrosine--tRNA ligase (402 aa).

Residues 47–56 carry the 'HIGH' region motif; it reads PTAPDLHLGH. Positions 232-236 match the 'KMSKS' region motif; the sequence is KMSKS. K235 is an ATP binding site. The S4 RNA-binding domain occupies 341-401; the sequence is VGVLDVLKQI…GKKRFMKLNI (61 aa).

It belongs to the class-I aminoacyl-tRNA synthetase family. TyrS type 2 subfamily. As to quaternary structure, homodimer.

The protein resides in the cytoplasm. It catalyses the reaction tRNA(Tyr) + L-tyrosine + ATP = L-tyrosyl-tRNA(Tyr) + AMP + diphosphate + H(+). In terms of biological role, catalyzes the attachment of tyrosine to tRNA(Tyr) in a two-step reaction: tyrosine is first activated by ATP to form Tyr-AMP and then transferred to the acceptor end of tRNA(Tyr). The polypeptide is Tyrosine--tRNA ligase (Helicobacter pylori (strain J99 / ATCC 700824) (Campylobacter pylori J99)).